We begin with the raw amino-acid sequence, 245 residues long: uncharacterized protein (245 aa).

4 helical membrane passes run phenylalanine 10 to tyrosine 30, threonine 94 to isoleucine 114, valine 134 to isoleucine 154, and arginine 196 to tryptophan 216.

The protein localises to the membrane. This is an uncharacterized protein from Dictyostelium discoideum (Social amoeba).